Consider the following 147-residue polypeptide: uncharacterized protein (147 aa).

A helical membrane pass occupies residues 71–91 (IDILAFVAGTVGVGSLVLLQF).

It localises to the virion. The protein resides in the host membrane. This is an uncharacterized protein from Acanthamoeba polyphaga mimivirus (APMV).